The chain runs to 302 residues: Pathogenicity locus probable regulatory protein HrpS (302 aa).

Positions 9–237 constitute a Sigma-54 factor interaction domain; that stretch reads DDLDEERVPN…LKAAAKRHVL (229 aa). ATP contacts are provided by residues 37–44 and 99–108; these read GETGTGKD and AQGGTLYLDE. A DNA-binding region (H-T-H motif) is located at residues 279–298; the sequence is IDAASLELDMPRRTLYRRIK.

In terms of biological role, member of the two-component regulatory system HrpR/HrpS that regulates the activation of the sigma factor hrpL which itself induces the expression of hprD as well as other hrp loci which are involved in plant pathogenicity, hrmA and avr genes. Probably interacts with sigma-54. The polypeptide is Pathogenicity locus probable regulatory protein HrpS (hrpS) (Pseudomonas savastanoi pv. phaseolicola (Pseudomonas syringae pv. phaseolicola)).